Here is a 420-residue protein sequence, read N- to C-terminus: DNA repair protein RadA (420 aa).

62-69 is a binding site for ATP; it reads GDPGIGKS. The short motif at 218–222 is the RadA KNRFG motif element; it reads KNRFG. The segment at 317 to 420 is lon-protease-like; sequence DAYLKSAGGV…IQEVLKKVFA (104 aa).

It belongs to the RecA family. RadA subfamily.

Functionally, plays a role in repairing double-strand DNA breaks, probably involving stabilizing or processing branched DNA or blocked replication forks. Required for efficient transformation with chromosomal (linear) DNA, but not for replicative plasmid DNA. Its increased sensitivity to a DNA damaging agent suggests it may be required for DNA repair. The chain is DNA repair protein RadA from Streptococcus pneumoniae (strain ATCC BAA-255 / R6).